A 118-amino-acid polypeptide reads, in one-letter code: UPF0102 protein NE0719 (118 aa).

The protein belongs to the UPF0102 family.

In Nitrosomonas europaea (strain ATCC 19718 / CIP 103999 / KCTC 2705 / NBRC 14298), this protein is UPF0102 protein NE0719.